The following is a 307-amino-acid chain: Glycine--tRNA ligase alpha subunit (307 aa).

Belongs to the class-II aminoacyl-tRNA synthetase family. Tetramer of two alpha and two beta subunits.

The protein localises to the cytoplasm. The enzyme catalyses tRNA(Gly) + glycine + ATP = glycyl-tRNA(Gly) + AMP + diphosphate. This is Glycine--tRNA ligase alpha subunit from Levilactobacillus brevis (strain ATCC 367 / BCRC 12310 / CIP 105137 / JCM 1170 / LMG 11437 / NCIMB 947 / NCTC 947) (Lactobacillus brevis).